The chain runs to 154 residues: Fibroblast growth factor 2 (154 aa).

The propeptide occupies 1-9; the sequence is MAAGSITSL. The interval 1–20 is disordered; sequence MAAGSITSLPALPEDGGGAF. Asn35 is a binding site for heparin. Tyr81 carries the phosphotyrosine; by TEC modification. Lys94 is covalently cross-linked (Glycyl lysine isopeptide (Lys-Gly) (interchain with G-Cter in SUMO1)). The segment at 127 to 143 is heparin-binding; it reads KRTGQYKLGSKTGPGQK.

Belongs to the heparin-binding growth factors family. Monomer. Homodimer. Interacts with FGFR1, FGFR2, FGFR3 and FGFR4. Affinity between fibroblast growth factors (FGFs) and their receptors is increased by heparan sulfate glycosaminoglycans that function as coreceptors. Interacts with CSPG4, FGFBP1 and TEC. Found in a complex with FGFBP1, FGF1 and FGF2. Interacts with FGFBP3. Interacts with integrin ITGAV:ITGB3; the interaction is required for FGF2 signaling. Interacts with SNORC (via the extracellular domain). Interacts with GPC3. Post-translationally, phosphorylation at Tyr-81 regulates FGF2 unconventional secretion. In terms of tissue distribution, found in all tissues examined.

The protein resides in the secreted. It is found in the nucleus. In terms of biological role, acts as a ligand for FGFR1, FGFR2, FGFR3 and FGFR4. Also acts as an integrin ligand which is required for FGF2 signaling. Binds to integrin ITGAV:ITGB3. Plays an important role in the regulation of cell survival, cell division, cell differentiation and cell migration. Functions as a potent mitogen in vitro. Can induce angiogenesis. Mediates phosphorylation of ERK1/2 and thereby promotes retinal lens fiber differentiation. This chain is Fibroblast growth factor 2 (Fgf2), found in Rattus norvegicus (Rat).